We begin with the raw amino-acid sequence, 106 residues long: Small ribosomal subunit protein bS18 (106 aa).

The tract at residues 1–41 is disordered; it reads MAEEHSNQRSQTFNGERTNRPSRKPRGDGERRGRRQGGRRR.

Belongs to the bacterial ribosomal protein bS18 family. As to quaternary structure, part of the 30S ribosomal subunit. Forms a tight heterodimer with protein bS6.

Binds as a heterodimer with protein bS6 to the central domain of the 16S rRNA, where it helps stabilize the platform of the 30S subunit. This chain is Small ribosomal subunit protein bS18, found in Oenococcus oeni (strain ATCC BAA-331 / PSU-1).